The sequence spans 259 residues: GTP-binding protein RHO4 (259 aa).

A GTP-binding site is contributed by 59–66 (GDGATGKT). Positions 81–89 (YVPTIFENY) match the Effector region motif. GTP-binding positions include 107 to 111 (DTAGQ) and 165 to 168 (LKSD). At Cys-256 the chain carries Cysteine methyl ester. The S-geranylgeranyl cysteine moiety is linked to residue Cys-256. A propeptide spans 257 to 259 (VVL) (removed in mature form).

This sequence belongs to the small GTPase superfamily. Rho family.

It is found in the cell membrane. The chain is GTP-binding protein RHO4 (RHO4) from Eremothecium gossypii (strain ATCC 10895 / CBS 109.51 / FGSC 9923 / NRRL Y-1056) (Yeast).